Consider the following 20-residue polypeptide: Cytochrome c oxidase subunit 6A1, mitochondrial (20 aa).

It belongs to the cytochrome c oxidase subunit 6A family. As to quaternary structure, component of the cytochrome c oxidase (complex IV, CIV), a multisubunit enzyme composed of 14 subunits. The complex is composed of a catalytic core of 3 subunits MT-CO1, MT-CO2 and MT-CO3, encoded in the mitochondrial DNA, and 11 supernumerary subunits COX4I, COX5A, COX5B, COX6A, COX6B, COX6C, COX7A, COX7B, COX7C, COX8 and NDUFA4, which are encoded in the nuclear genome. The complex exists as a monomer or a dimer and forms supercomplexes (SCs) in the inner mitochondrial membrane with NADH-ubiquinone oxidoreductase (complex I, CI) and ubiquinol-cytochrome c oxidoreductase (cytochrome b-c1 complex, complex III, CIII), resulting in different assemblies (supercomplex SCI(1)III(2)IV(1) and megacomplex MCI(2)III(2)IV(2)). Liver specific isoform.

It localises to the mitochondrion inner membrane. The protein operates within energy metabolism; oxidative phosphorylation. Functionally, component of the cytochrome c oxidase, the last enzyme in the mitochondrial electron transport chain which drives oxidative phosphorylation. The respiratory chain contains 3 multisubunit complexes succinate dehydrogenase (complex II, CII), ubiquinol-cytochrome c oxidoreductase (cytochrome b-c1 complex, complex III, CIII) and cytochrome c oxidase (complex IV, CIV), that cooperate to transfer electrons derived from NADH and succinate to molecular oxygen, creating an electrochemical gradient over the inner membrane that drives transmembrane transport and the ATP synthase. Cytochrome c oxidase is the component of the respiratory chain that catalyzes the reduction of oxygen to water. Electrons originating from reduced cytochrome c in the intermembrane space (IMS) are transferred via the dinuclear copper A center (CU(A)) of subunit 2 and heme A of subunit 1 to the active site in subunit 1, a binuclear center (BNC) formed by heme A3 and copper B (CU(B)). The BNC reduces molecular oxygen to 2 water molecules unsing 4 electrons from cytochrome c in the IMS and 4 protons from the mitochondrial matrix. In Ovis aries (Sheep), this protein is Cytochrome c oxidase subunit 6A1, mitochondrial (COX6A1).